A 201-amino-acid chain; its full sequence is Probable phosphopantothenoylcysteine decarboxylase (201 aa).

Residues 20–22, 45–47, 98–101, and alanine 132 contribute to the FMN site; these read GSV, SKS, and SANT. Residues asparagine 134 and 164-166 contribute to the substrate site; that span reads KLA. The active-site Proton donor is the cysteine 167. Substrate is bound at residue methionine 175.

Belongs to the HFCD (homooligomeric flavin containing Cys decarboxylase) superfamily. Homotrimer. Requires FMN as cofactor. As to expression, expressed in roots, shoots, leaves, flowers, developing siliques and seeds.

The catalysed reaction is N-[(R)-4-phosphopantothenoyl]-L-cysteine + H(+) = (R)-4'-phosphopantetheine + CO2. It participates in cofactor biosynthesis; coenzyme A biosynthesis; CoA from (R)-pantothenate: step 3/5. Functionally, involved in plant growth and salt and osmotic tolerance. Catalyzes the decarboxylation of 4'-phosphopantothenoylcysteine to 4'-phosphopantetheine, a key step in coenzyme A biosynthesis. The enzyme is also able to decarboxylate pantothenoylcysteine to pantothenoylcysteamine. This is Probable phosphopantothenoylcysteine decarboxylase (HAL3B) from Arabidopsis thaliana (Mouse-ear cress).